Consider the following 104-residue polypeptide: Flagellar hook-basal body complex protein FliE (104 aa).

It belongs to the FliE family.

It is found in the bacterial flagellum basal body. This chain is Flagellar hook-basal body complex protein FliE, found in Escherichia coli (strain 55989 / EAEC).